We begin with the raw amino-acid sequence, 319 residues long: MSLNFLEFEKPIAELEAKVEALREISRRGDENALDLEKEIKQLEDKCLELKKKTFSDLGAWEVAQLARHPERPYVLDYIEHMFTEFDELAGDRAFADDKALVGGIARLDGRPVMVIGHQKGRGTKEKVIRNFGMPKPEGYRKAKRLMQMAERFNMPVITFIDTAGAYPGVGAEERGQSEAIAMNLKIMSELSVPVICNVVGEGGSGGALAIGVGDYVNMLQYSTYSVISPEGCASILWRDSDKAPQAAEAMGLVAPRLKELELIDTIIDEPLGGAHRDHKATAENIKQRLLEQLKELDAFDNEALLERRYQRLMSYGYC.

One can recognise a CoA carboxyltransferase C-terminal domain in the interval 35–296 (DLEKEIKQLE…KQRLLEQLKE (262 aa)).

Belongs to the AccA family. In terms of assembly, acetyl-CoA carboxylase is a heterohexamer composed of biotin carboxyl carrier protein (AccB), biotin carboxylase (AccC) and two subunits each of ACCase subunit alpha (AccA) and ACCase subunit beta (AccD).

It is found in the cytoplasm. The enzyme catalyses N(6)-carboxybiotinyl-L-lysyl-[protein] + acetyl-CoA = N(6)-biotinyl-L-lysyl-[protein] + malonyl-CoA. It participates in lipid metabolism; malonyl-CoA biosynthesis; malonyl-CoA from acetyl-CoA: step 1/1. In terms of biological role, component of the acetyl coenzyme A carboxylase (ACC) complex. First, biotin carboxylase catalyzes the carboxylation of biotin on its carrier protein (BCCP) and then the CO(2) group is transferred by the carboxyltransferase to acetyl-CoA to form malonyl-CoA. The polypeptide is Acetyl-coenzyme A carboxylase carboxyl transferase subunit alpha (Aliivibrio fischeri (strain MJ11) (Vibrio fischeri)).